Consider the following 724-residue polypeptide: Probable ATP-dependent RNA helicase DDX4 (724 aa).

Positions 1 to 11 (MSGQEDWESEI) are enriched in acidic residues. 2 disordered regions span residues 1-25 (MSGQ…SNSE) and 37-241 (SSNN…QGPR). Residues 108 to 130 (SNGKQESGDFTNDDNRTIDDNRR) show a composition bias toward basic and acidic residues. Residues 168 to 182 (EQSGFTSNDGFNNET) are compositionally biased toward polar residues. A Q motif motif is present at residues 286–314 (LTFEEANLCDSLAKNVCKSGYVKLTPIQK). The region spanning 317 to 500 (IPIIVAGRDL…REILKPDYLF (184 aa)) is the Helicase ATP-binding domain. 330-337 (AQTGSGKT) serves as a coordination point for ATP. The short motif at 444-447 (DEAD) is the DEAD box element. The Helicase C-terminal domain maps to 512–675 (DVEQMVIEVD…EVPAWLEEVA (164 aa)). The segment covering 683–692 (AYNPRSNKFA) has biased composition (polar residues). Residues 683–724 (AYNPRSNKFASTDDRKRGDSRGDYSTSGFSPSAAQAEEEDWG) form a disordered region. The span at 693–704 (STDDRKRGDSRG) shows a compositional bias: basic and acidic residues. Polar residues predominate over residues 705 to 715 (DYSTSGFSPSA).

This sequence belongs to the DEAD box helicase family. DDX4/VASA subfamily.

It is found in the cytoplasm. The catalysed reaction is ATP + H2O = ADP + phosphate + H(+). Probable ATP-dependent RNA helicase required during spermatogenesis to repress transposable elements and preventing their mobilization, which is essential for the germline integrity. Acts via the piRNA metabolic process, which mediates the repression of transposable elements during meiosis by forming complexes composed of piRNAs and Piwi proteins and governs the methylation and subsequent repression of transposons. Involved in the secondary piRNAs metabolic process, the production of piRNAs in fetal male germ cells through a ping-pong amplification cycle. The sequence is that of Probable ATP-dependent RNA helicase DDX4 from Pelophylax lessonae (Pool frog).